Consider the following 692-residue polypeptide: Elongation factor G (692 aa).

The tr-type G domain maps to 8–283 (NRIRNIGIAA…AVIDYLPAPT (276 aa)). Residues 17–24 (AHIDAGKT), 81–85 (DTPGH), and 135–138 (NKMD) contribute to the GTP site.

It belongs to the TRAFAC class translation factor GTPase superfamily. Classic translation factor GTPase family. EF-G/EF-2 subfamily.

Its subcellular location is the cytoplasm. Its function is as follows. Catalyzes the GTP-dependent ribosomal translocation step during translation elongation. During this step, the ribosome changes from the pre-translocational (PRE) to the post-translocational (POST) state as the newly formed A-site-bound peptidyl-tRNA and P-site-bound deacylated tRNA move to the P and E sites, respectively. Catalyzes the coordinated movement of the two tRNA molecules, the mRNA and conformational changes in the ribosome. The sequence is that of Elongation factor G (fusA) from Helicobacter pylori (strain ATCC 700392 / 26695) (Campylobacter pylori).